A 446-amino-acid polypeptide reads, in one-letter code: tRNA (guanine-N(7)-)-methyltransferase non-catalytic subunit TRM82 (446 aa).

A disordered region spans residues 67–97 (LTQTSEDTEQENTAPYKKQKSSVSKPIKVPK). Over residues 87–97 (SSVSKPIKVPK) the composition is skewed to low complexity. 3 WD repeats span residues 107–147 (PIYN…TENC), 202–243 (GHVS…IVKH), and 247–287 (GHRE…LLSK).

It belongs to the WD repeat TRM82 family. As to quaternary structure, forms a heterodimer with the catalytic subunit TRM8.

It is found in the nucleus. It participates in tRNA modification; N(7)-methylguanine-tRNA biosynthesis. Required for the formation of N(7)-methylguanine at position 46 (m7G46) in tRNA. In the complex, it is required to stabilize and induce conformational changes of the catalytic subunit. In Debaryomyces hansenii (strain ATCC 36239 / CBS 767 / BCRC 21394 / JCM 1990 / NBRC 0083 / IGC 2968) (Yeast), this protein is tRNA (guanine-N(7)-)-methyltransferase non-catalytic subunit TRM82.